The primary structure comprises 151 residues: Small ribosomal subunit protein uS15 (151 aa).

A disordered region spans residues 1–20 (MARLHSGKRGSSGSTRPLRT).

It belongs to the universal ribosomal protein uS15 family. In terms of assembly, part of the 30S ribosomal subunit.

The polypeptide is Small ribosomal subunit protein uS15 (Methanococcus maripaludis (strain DSM 14266 / JCM 13030 / NBRC 101832 / S2 / LL)).